A 175-amino-acid chain; its full sequence is ATP synthase subunit delta (175 aa).

Belongs to the ATPase delta chain family. As to quaternary structure, F-type ATPases have 2 components, F(1) - the catalytic core - and F(0) - the membrane proton channel. F(1) has five subunits: alpha(3), beta(3), gamma(1), delta(1), epsilon(1). F(0) has three main subunits: a(1), b(2) and c(10-14). The alpha and beta chains form an alternating ring which encloses part of the gamma chain. F(1) is attached to F(0) by a central stalk formed by the gamma and epsilon chains, while a peripheral stalk is formed by the delta and b chains.

It is found in the cell membrane. In terms of biological role, f(1)F(0) ATP synthase produces ATP from ADP in the presence of a proton or sodium gradient. F-type ATPases consist of two structural domains, F(1) containing the extramembraneous catalytic core and F(0) containing the membrane proton channel, linked together by a central stalk and a peripheral stalk. During catalysis, ATP synthesis in the catalytic domain of F(1) is coupled via a rotary mechanism of the central stalk subunits to proton translocation. Its function is as follows. This protein is part of the stalk that links CF(0) to CF(1). It either transmits conformational changes from CF(0) to CF(1) or is implicated in proton conduction. In Ruminiclostridium cellulolyticum (strain ATCC 35319 / DSM 5812 / JCM 6584 / H10) (Clostridium cellulolyticum), this protein is ATP synthase subunit delta.